The following is a 198-amino-acid chain: Probable chemoreceptor glutamine deamidase CheD (198 aa).

Belongs to the CheD family.

It catalyses the reaction L-glutaminyl-[protein] + H2O = L-glutamyl-[protein] + NH4(+). Its function is as follows. Probably deamidates glutamine residues to glutamate on methyl-accepting chemotaxis receptors (MCPs), playing an important role in chemotaxis. The sequence is that of Probable chemoreceptor glutamine deamidase CheD from Xanthomonas axonopodis pv. citri (strain 306).